The primary structure comprises 556 residues: Endoplasmic reticulum membrane protein 65 (556 aa).

The Cytoplasmic segment spans residues 1–87; the sequence is MQHKDTAVAK…IRIPMFLEKF (87 aa). Residue Ser-22 is modified to Phosphoserine. Residues 88-108 form a helical membrane-spanning segment; the sequence is MLFALLTSLDCFLYYFTVLPI. Topologically, residues 109 to 151 are lumenal; it reads RLIKGYVKQFKSYRQHYRLQQRSGHKNKIPFRYRITSREYKER. Residues 152 to 172 traverse the membrane as a helical segment; sequence CMIFIIVISSILLSKLDTSKL. At 173–224 the chain is on the cytoplasmic side; it reads YHRIKRQSTMKLYMLFSVLEMADKMLASLGQSLLTVMLSRKNSERILLHKCL. Residues 225–245 traverse the membrane as a helical segment; sequence LVSMSLTYVTIHGYVLVYQAI. The Lumenal portion of the chain corresponds to 246–330; the sequence is SLNIAVNSYS…INFWSPRSTL (85 aa). An N-linked (GlcNAc...) asparagine glycan is attached at Asn-318. Residues 331–351 traverse the membrane as a helical segment; it reads SIVINILCGPMVSVVGSEVLV. The Cytoplasmic segment spans residues 352–391; the sequence is DWAKHAYITKFNRIRPQIYDKFYYIIYKDYSTRTHKLEDR. A helical membrane pass occupies residues 392-412; it reads LGLPLPAFVVLFIVMVRPTLF. At 413–428 the chain is on the lumenal side; that stretch reads KSSEPSYLPSLFRILF. Residues 429 to 449 traverse the membrane as a helical segment; that stretch reads MGASVFLLALLAKFTLDLILI. Residues 450–556 are Cytoplasmic-facing; that stretch reads KWSKRIEQRF…RYKMVSKRIW (107 aa).

Belongs to the TAPT1 family. Interacts with SLP1.

The protein localises to the endoplasmic reticulum membrane. It localises to the mitochondrion. Its function is as follows. May be involved in membrane protein folding. This is Endoplasmic reticulum membrane protein 65 from Saccharomyces cerevisiae (strain ATCC 204508 / S288c) (Baker's yeast).